A 96-amino-acid polypeptide reads, in one-letter code: Large ribosomal subunit protein uL23 (96 aa).

This sequence belongs to the universal ribosomal protein uL23 family. As to quaternary structure, part of the 50S ribosomal subunit. Contacts protein L29, and trigger factor when it is bound to the ribosome.

One of the early assembly proteins it binds 23S rRNA. One of the proteins that surrounds the polypeptide exit tunnel on the outside of the ribosome. Forms the main docking site for trigger factor binding to the ribosome. The protein is Large ribosomal subunit protein uL23 of Aster yellows witches'-broom phytoplasma (strain AYWB).